A 685-amino-acid polypeptide reads, in one-letter code: Sodium/glucose cotransporter 4 (685 aa).

The disordered stretch occupies residues 1–20; the sequence is MNTELVAMEPGVSRNGVRTE. Residues 1–32 lie on the Extracellular side of the membrane; sequence MNTELVAMEPGVSRNGVRTETTTNPSLGLHTY. The helical transmembrane segment at 33-53 threads the bilayer; that stretch reads DIVVVVIYFVFVLAVGIWSSI. At 54–71 the chain is on the cytoplasmic side; sequence RASRGTVGGYFLAGRSMT. A helical transmembrane segment spans residues 72–94; that stretch reads WWPIGASLMSSNVGSGLFIGLAG. The Extracellular segment spans residues 95-110; sequence TGAAGGLAVGGFEWNA. The chain crosses the membrane as a helical span at residues 111–131; it reads TFLLLALGWIFVPVYIAAGVV. Over 132-153 the chain is Cytoplasmic; that stretch reads TMPQYLKKRFGGQRIQVYMSVL. A helical transmembrane segment spans residues 154–174; sequence SLILYIFTKISTDIFSGALFI. At 175 to 186 the chain is on the extracellular side; that stretch reads QMALGWNLYLST. Residues 187–207 traverse the membrane as a helical segment; it reads VILLVVTAVYTIAGGLTAVIY. At 208–213 the chain is on the cytoplasmic side; it reads TDALQT. Residues 214–234 traverse the membrane as a helical segment; that stretch reads VIMVGGALVLMFLGFQEVGWY. At 235–271 the chain is on the extracellular side; sequence PGLQQLYRQAIPNTTVPNTTCHLPRPDAFHMLRDPVN. A glycan (N-linked (GlcNAc...) asparagine) is linked at Asn247. A helical membrane pass occupies residues 272-292; the sequence is GDIPWPGLIFGLTVLATWCWC. Residues 293-313 are Cytoplasmic-facing; the sequence is TDQVIVQRSLAAKNLSHAKGG. The helical transmembrane segment at 314 to 334 threads the bilayer; the sequence is SVLGGYLKILPMFFIVMPGMI. Over 335 to 379 the chain is Extracellular; sequence SRALYPDEVACVDPDICQRVCGARVGCSNIAYPKLVMALMPVGLR. A helical membrane pass occupies residues 380–402; sequence GLMIAVIMAALMSSLTSIFNSSS. The Cytoplasmic portion of the chain corresponds to 403–423; it reads TLFAIDVWQRFRRQASEQELM. A helical membrane pass occupies residues 424–444; that stretch reads VVGRLFVVFLVVISILWIPII. Residues 445 to 455 lie on the Extracellular side of the membrane; sequence QSSNSGQLFDY. The chain crosses the membrane as a helical span at residues 456-476; it reads IQSITSYLAPPITALFLLAIF. Residues 477–483 are Cytoplasmic-facing; sequence CKRVNEP. A helical transmembrane segment spans residues 484–504; it reads GAFWGLMFGLVVGILRMILEF. Topologically, residues 505 to 526 are extracellular; the sequence is SYSAPACGEMDRRPAVLKDFHY. Residues 527-547 form a helical membrane-spanning segment; that stretch reads LYFALLLCGLTAIIIVVISFF. Residues 548 to 664 are Cytoplasmic-facing; sequence TEPIPDDKLA…SIEEEPLWRR (117 aa). The segment at 577-616 is disordered; that stretch reads VSVNNTEDDNSPGLAGRPVVEGPAGDEEEANTTQGPEQPG. A helical transmembrane segment spans residues 665–685; the sequence is VCNINAIILLAINIFLWGYFA.

It belongs to the sodium:solute symporter (SSF) (TC 2.A.21) family.

Its subcellular location is the cell membrane. The enzyme catalyses D-mannose(out) + n Na(+)(out) = D-mannose(in) + n Na(+)(in). In terms of biological role, electrogenic Na(+)-coupled sugar symporter that may play a primary role in D-mannose and possibly D-fructose and D-glucose transport at the plasma membrane. Transporter activity is driven by a transmembrane Na(+) electrochemical gradient set by the Na(+)/K(+) pump. Exclusively recognizes sugar substrates having a pyranose ring with an axial hydroxyl group on carbon 2. The polypeptide is Sodium/glucose cotransporter 4 (Slc5a9) (Mus musculus (Mouse)).